Reading from the N-terminus, the 557-residue chain is NADP-dependent malic enzyme (557 aa).

Y91 functions as the Proton donor in the catalytic mechanism. R144 is a binding site for NADP(+). Positions 144 and 162 each coordinate substrate. K162 (proton acceptor) is an active-site residue. Mn(2+)-binding residues include E234 and D235. N238 contributes to the NADP(+) binding site. Residue D258 coordinates Mn(2+). NADP(+) is bound by residues 291–294, S325, N397, and N443; that span reads AGEA. N443 provides a ligand contact to substrate.

It belongs to the malic enzymes family. As to quaternary structure, homotetramer. It depends on Mg(2+) as a cofactor. The cofactor is Mn(2+). In terms of processing, the N-terminus is blocked.

The protein localises to the cytoplasm. The catalysed reaction is (S)-malate + NADP(+) = pyruvate + CO2 + NADPH. It carries out the reaction oxaloacetate + H(+) = pyruvate + CO2. This chain is NADP-dependent malic enzyme (ME1), found in Columba livia (Rock dove).